The chain runs to 54 residues: UPF0235 protein in proC 3'region (54 aa).

This sequence belongs to the UPF0235 family.

The chain is UPF0235 protein in proC 3'region from Vibrio alginolyticus.